We begin with the raw amino-acid sequence, 141 residues long: Protein X (141 aa).

Residues 22-52 (GPQSSGPPFPRPAAGSAASSASSPSPSDESD) are disordered. Positions 33–48 (PAAGSAASSASSPSPS) are enriched in low complexity. A mitochondrial targeting sequence region spans residues 68 to 113 (PCCLVFTCADLRTMDSTVNFVSWHAKRQLGMPSKDLWTPYIKDQLL).

It belongs to the orthohepadnavirus protein X family. In terms of assembly, may form homodimer. May interact with host CEBPA, CFLAR, CREB1, DDB1, E4F1, HBXIP, HSPD1/HSP60, NFKBIA, POLR2E and SMAD4. Interacts with host SMC5-SMC6 complex and induces its degradation. Interacts with host TRPC4AP; leading to prevent ubiquitination of TRPC4AP. Interacts with host PLSCR1; this interaction promotes ubiquitination and degradation of HBx and impairs HBx-mediated cell proliferation. In terms of processing, a fraction may be phosphorylated in insect cells and HepG2 cells, a human hepatoblastoma cell line. Phosphorylated in vitro by host protein kinase C or mitogen-activated protein kinase. N-acetylated in insect cells.

It is found in the host cytoplasm. The protein resides in the host nucleus. The protein localises to the host mitochondrion. Multifunctional protein that plays a role in silencing host antiviral defenses and promoting viral transcription. Does not seem to be essential for HBV infection. May be directly involved in development of cirrhosis and liver cancer (hepatocellular carcinoma). Most of cytosolic activities involve modulation of cytosolic calcium. The effect on apoptosis is controversial depending on the cell types in which the studies have been conducted. May induce apoptosis by localizing in mitochondria and causing loss of mitochondrial membrane potential. May also modulate apoptosis by binding host CFLAR, a key regulator of the death-inducing signaling complex (DISC). Promotes viral transcription by using the host E3 ubiquitin ligase DDB1 to target the SMC5-SMC6 complex to proteasomal degradation. This host complex would otherwise bind to viral episomal DNA, and prevents its transcription. Moderately stimulates transcription of many different viral and cellular transcription elements. Promoters and enhancers stimulated by HBx contain DNA binding sites for NF-kappa-B, AP-1, AP-2, c-EBP, ATF/CREB, or the calcium-activated factor NF-AT. In Woodchuck hepatitis B virus (isolate w64/pWS23) (WHV), this protein is Protein X.